The sequence spans 139 residues: Phosphoribosyl-AMP cyclohydrolase (139 aa).

D91 contacts Mg(2+). C92 contributes to the Zn(2+) binding site. Mg(2+)-binding residues include D93 and D95. 2 residues coordinate Zn(2+): C110 and C117.

It belongs to the PRA-CH family. In terms of assembly, homodimer. Requires Mg(2+) as cofactor. Zn(2+) serves as cofactor.

The protein resides in the cytoplasm. The catalysed reaction is 1-(5-phospho-beta-D-ribosyl)-5'-AMP + H2O = 1-(5-phospho-beta-D-ribosyl)-5-[(5-phospho-beta-D-ribosylamino)methylideneamino]imidazole-4-carboxamide. Its pathway is amino-acid biosynthesis; L-histidine biosynthesis; L-histidine from 5-phospho-alpha-D-ribose 1-diphosphate: step 3/9. Catalyzes the hydrolysis of the adenine ring of phosphoribosyl-AMP. The protein is Phosphoribosyl-AMP cyclohydrolase of Brucella abortus (strain S19).